We begin with the raw amino-acid sequence, 390 residues long: Flagellar P-ring protein (390 aa).

A signal peptide spans 1–36 (MFFSRKIRSLLLTPKRRWSLILTLCLIFTGINFSTS).

Belongs to the FlgI family. The basal body constitutes a major portion of the flagellar organelle and consists of four rings (L,P,S, and M) mounted on a central rod.

The protein resides in the periplasm. It is found in the bacterial flagellum basal body. Assembles around the rod to form the L-ring and probably protects the motor/basal body from shearing forces during rotation. The protein is Flagellar P-ring protein of Desulfotalea psychrophila (strain LSv54 / DSM 12343).